The primary structure comprises 430 residues: Adenylosuccinate synthetase (430 aa).

GTP is bound by residues glycine 12–lysine 18 and glycine 40–threonine 42. Catalysis depends on aspartate 13, which acts as the Proton acceptor. Aspartate 13 and glycine 40 together coordinate Mg(2+). IMP-binding positions include aspartate 13–lysine 16, asparagine 38–histidine 41, threonine 128, arginine 142, glutamine 223, threonine 238, and arginine 302. Histidine 41 serves as the catalytic Proton donor. Threonine 298–arginine 304 contributes to the substrate binding site. Residues arginine 304, serine 330 to aspartate 332, and serine 412 to glycine 414 each bind GTP.

Belongs to the adenylosuccinate synthetase family. Homodimer. It depends on Mg(2+) as a cofactor.

The protein resides in the cytoplasm. It catalyses the reaction IMP + L-aspartate + GTP = N(6)-(1,2-dicarboxyethyl)-AMP + GDP + phosphate + 2 H(+). It participates in purine metabolism; AMP biosynthesis via de novo pathway; AMP from IMP: step 1/2. Its function is as follows. Plays an important role in the de novo pathway of purine nucleotide biosynthesis. Catalyzes the first committed step in the biosynthesis of AMP from IMP. The chain is Adenylosuccinate synthetase from Streptococcus pyogenes serotype M6 (strain ATCC BAA-946 / MGAS10394).